The chain runs to 206 residues: Putative type I restriction enzyme MpnIIP endonuclease subunit C-terminal part (206 aa).

Its function is as follows. The C-terminal section of a putative type I restriction enzyme that if reconstituted might recognize 5'-GAN(7)TAY-3' and cleave a random distance away. Subunit R is required for both nuclease and ATPase activities, but not for modification. The protein is Putative type I restriction enzyme MpnIIP endonuclease subunit C-terminal part of Mycoplasma pneumoniae (strain ATCC 29342 / M129 / Subtype 1) (Mycoplasmoides pneumoniae).